A 35-amino-acid chain; its full sequence is Thionin NsW1 (35 aa).

3 disulfide bridges follow: C4–C32, C12–C30, and C16–C26.

In terms of processing, contains 4 disulfide bonds.

Its subcellular location is the secreted. In terms of biological role, antimicrobial peptide disrupting membranes. Has antibacterial against Gram-positive bacteria S.aureus (MIC=6.5 uM) and B.subtilis (MIC=3.25 uM) but not against Gram-negative bacterium E.coli. Has antifungal activity against C.albicans (MIC=1.63 uM). The polypeptide is Thionin NsW1 (Nigella sativa (Black cumin)).